Here is a 620-residue protein sequence, read N- to C-terminus: Cryptochrome-1 (620 aa).

The region spanning V3 to L132 is the Photolyase/cryptochrome alpha/beta domain. 3 consecutive short sequence motifs (LIR) follow at residues N50–F54, D82–L87, and K151–L156. An FAD-binding site is contributed by S252. Short sequence motifs (LIR) lie at residues L255–L260, D271–V276, S285–L290, and T335–W339. FAD is bound at residue Q289. Residue H355 coordinates FAD. Residues K379–L384 carry the LIR 8 motif. D387–D389 is an FAD binding site. 5 consecutive short sequence motifs (LIR) follow at residues G395–L400, H411–V416, R430–V435, Q486–L491, and S492–L497. A disordered region spans residues T593–N620.

It belongs to the DNA photolyase class-1 family. Component of the circadian core oscillator, which includes the CRY proteins, CLOCK or NPAS2, BMAL1 or BMAL2, CSNK1E, and the PER proteins. Requires FAD as cofactor. (6R)-5,10-methylene-5,6,7,8-tetrahydrofolate serves as cofactor. As to expression, expressed in the retina.

Its subcellular location is the cytoplasm. The protein localises to the nucleus. Functionally, transcriptional repressor which forms a core component of the circadian clock. The circadian clock, an internal time-keeping system, regulates various physiological processes through the generation of approximately 24 hour circadian rhythms in gene expression, which are translated into rhythms in metabolism and behavior. It is derived from the Latin roots 'circa' (about) and 'diem' (day) and acts as an important regulator of a wide array of physiological functions including metabolism, sleep, body temperature, blood pressure, endocrine, immune, cardiovascular, and renal function. Consists of two major components: the central clock, residing in the suprachiasmatic nucleus (SCN) of the brain, and the peripheral clocks that are present in nearly every tissue and organ system. Both the central and peripheral clocks can be reset by environmental cues, also known as Zeitgebers (German for 'timegivers'). The predominant Zeitgeber for the central clock is light, which is sensed by retina and signals directly to the SCN. The central clock entrains the peripheral clocks through neuronal and hormonal signals, body temperature and feeding-related cues, aligning all clocks with the external light/dark cycle. Circadian rhythms allow an organism to achieve temporal homeostasis with its environment at the molecular level by regulating gene expression to create a peak of protein expression once every 24 hours to control when a particular physiological process is most active with respect to the solar day. Transcription and translation of core clock components (CLOCK, NPAS2, BMAL1, BMAL2, PER1, PER2, PER3, CRY1 and CRY2) plays a critical role in rhythm generation, whereas delays imposed by post-translational modifications (PTMs) are important for determining the period (tau) of the rhythms (tau refers to the period of a rhythm and is the length, in time, of one complete cycle). A diurnal rhythm is synchronized with the day/night cycle, while the ultradian and infradian rhythms have a period shorter and longer than 24 hours, respectively. Disruptions in the circadian rhythms contribute to the pathology of cardiovascular diseases, cancer, metabolic syndromes and aging. A transcription/translation feedback loop (TTFL) forms the core of the molecular circadian clock mechanism. Transcription factors, CLOCK or NPAS2 and BMAL1 or BMAL2, form the positive limb of the feedback loop, act in the form of a heterodimer and activate the transcription of core clock genes and clock-controlled genes (involved in key metabolic processes), harboring E-box elements (5'-CACGTG-3') within their promoters. The core clock genes: PER1/2/3 and CRY1/2 which are transcriptional repressors form the negative limb of the feedback loop and interact with the CLOCK|NPAS2-BMAL1|BMAL2 heterodimer inhibiting its activity and thereby negatively regulating their own expression. This heterodimer also activates nuclear receptors NR1D1/2 and RORA/B/G, which form a second feedback loop and which activate and repress BMAL1 transcription, respectively. CRY1 and CRY2 have redundant functions but also differential and selective contributions at least in defining the pace of the SCN circadian clock and its circadian transcriptional outputs. More potent transcriptional repressor in cerebellum and liver than CRY2, though more effective in lengthening the period of the SCN oscillator. On its side, CRY2 seems to play a critical role in tuning SCN circadian period by opposing the action of CRY1. With CRY2, is dispensable for circadian rhythm generation but necessary for the development of intercellular networks for rhythm synchrony. Capable of translocating circadian clock core proteins such as PER proteins to the nucleus. Interacts with CLOCK-BMAL1 independently of PER proteins and is found at CLOCK-BMAL1-bound sites, suggesting that CRY may act as a molecular gatekeeper to maintain CLOCK-BMAL1 in a poised and repressed state until the proper time for transcriptional activation. This chain is Cryptochrome-1 (CRY1), found in Erithacus rubecula (European robin).